Reading from the N-terminus, the 180-residue chain is Capsid assembly scaffolding protein (180 aa).

Belongs to the SPP1-like scaffolding protein family. As to quaternary structure, homodimer.

In terms of biological role, scaffolding protein involved in the icosahedric procapsid assembly. Coassembles with the capsid proteins to form the procapsid, in which the scaffolding protein is found within the external shell of icosahedrally arranged capsid protein subunits. In a subsequent step the scaffolding protein molecules are released from the procapsid. The sequence is that of Capsid assembly scaffolding protein (g20) from Lactococcus phage mv4 (Lactococcus delbrueckii bacteriophage mv4).